The following is a 130-amino-acid chain: Small ribosomal subunit protein bS6 (130 aa).

A disordered region spans residues 100–130 (SPMVKAKDERRERREDFAEAGDDVDAGDSEE). Positions 104–116 (KAKDERRERREDF) are enriched in basic and acidic residues. Positions 117-130 (AEAGDDVDAGDSEE) are enriched in acidic residues.

The protein belongs to the bacterial ribosomal protein bS6 family.

In terms of biological role, binds together with bS18 to 16S ribosomal RNA. This chain is Small ribosomal subunit protein bS6, found in Pectobacterium carotovorum subsp. carotovorum (strain PC1).